Reading from the N-terminus, the 113-residue chain is Cytochrome c (113 aa).

The heme c site is built by Cys-21, Cys-24, His-25, and Met-90.

The protein belongs to the cytochrome c family. In terms of processing, binds 1 heme c group covalently per subunit.

It is found in the mitochondrion intermembrane space. Functionally, electron carrier protein. The oxidized form of the cytochrome c heme group can accept an electron from the heme group of the cytochrome c1 subunit of cytochrome reductase. Cytochrome c then transfers this electron to the cytochrome oxidase complex, the final protein carrier in the mitochondrial electron-transport chain. This Dictyostelium discoideum (Social amoeba) protein is Cytochrome c (cytC).